The chain runs to 475 residues: Siroheme synthase (475 aa).

The tract at residues 1 to 204 is precorrin-2 dehydrogenase /sirohydrochlorin ferrochelatase; that stretch reads MDYLPVFLNI…GRDQAAQDYL (204 aa). Residues 22–23 and 43–44 contribute to the NAD(+) site; these read EI and PA. At Ser-129 the chain carries Phosphoserine. The tract at residues 218–475 is uroporphyrinogen-III C-methyltransferase; the sequence is GEVYLVGAGP…MGTSSGPGYP (258 aa). S-adenosyl-L-methionine is bound at residue Pro-227. Asp-250 functions as the Proton acceptor in the catalytic mechanism. Residue Lys-272 is the Proton donor of the active site. Residues 303–305, Ile-308, 333–334, Met-385, and Gly-414 each bind S-adenosyl-L-methionine; these read GGD and TA.

It in the N-terminal section; belongs to the precorrin-2 dehydrogenase / sirohydrochlorin ferrochelatase family. In the C-terminal section; belongs to the precorrin methyltransferase family.

It carries out the reaction uroporphyrinogen III + 2 S-adenosyl-L-methionine = precorrin-2 + 2 S-adenosyl-L-homocysteine + H(+). It catalyses the reaction precorrin-2 + NAD(+) = sirohydrochlorin + NADH + 2 H(+). The catalysed reaction is siroheme + 2 H(+) = sirohydrochlorin + Fe(2+). Its pathway is cofactor biosynthesis; adenosylcobalamin biosynthesis; precorrin-2 from uroporphyrinogen III: step 1/1. It functions in the pathway cofactor biosynthesis; adenosylcobalamin biosynthesis; sirohydrochlorin from precorrin-2: step 1/1. The protein operates within porphyrin-containing compound metabolism; siroheme biosynthesis; precorrin-2 from uroporphyrinogen III: step 1/1. It participates in porphyrin-containing compound metabolism; siroheme biosynthesis; siroheme from sirohydrochlorin: step 1/1. Its pathway is porphyrin-containing compound metabolism; siroheme biosynthesis; sirohydrochlorin from precorrin-2: step 1/1. In terms of biological role, multifunctional enzyme that catalyzes the SAM-dependent methylations of uroporphyrinogen III at position C-2 and C-7 to form precorrin-2 via precorrin-1. Then it catalyzes the NAD-dependent ring dehydrogenation of precorrin-2 to yield sirohydrochlorin. Finally, it catalyzes the ferrochelation of sirohydrochlorin to yield siroheme. The protein is Siroheme synthase of Nitrosomonas europaea (strain ATCC 19718 / CIP 103999 / KCTC 2705 / NBRC 14298).